A 207-amino-acid polypeptide reads, in one-letter code: Small ribosomal subunit protein uS4 (207 aa).

Positions 32 to 55 (CKLDSKPGQHGRTSGARTSDYGTQ) are disordered. Positions 42–53 (GRTSGARTSDYG) are enriched in polar residues. One can recognise an S4 RNA-binding domain in the interval 97 to 158 (SRLDNVVYRM…TKKKQARILE (62 aa)).

It belongs to the universal ribosomal protein uS4 family. Part of the 30S ribosomal subunit. Contacts protein S5. The interaction surface between S4 and S5 is involved in control of translational fidelity.

Its function is as follows. One of the primary rRNA binding proteins, it binds directly to 16S rRNA where it nucleates assembly of the body of the 30S subunit. Functionally, with S5 and S12 plays an important role in translational accuracy. The polypeptide is Small ribosomal subunit protein uS4 (Paraburkholderia phytofirmans (strain DSM 17436 / LMG 22146 / PsJN) (Burkholderia phytofirmans)).